The primary structure comprises 627 residues: DNA mismatch repair protein MutL (627 aa).

Belongs to the DNA mismatch repair MutL/HexB family.

In terms of biological role, this protein is involved in the repair of mismatches in DNA. It is required for dam-dependent methyl-directed DNA mismatch repair. May act as a 'molecular matchmaker', a protein that promotes the formation of a stable complex between two or more DNA-binding proteins in an ATP-dependent manner without itself being part of a final effector complex. This is DNA mismatch repair protein MutL from Mesorhizobium japonicum (strain LMG 29417 / CECT 9101 / MAFF 303099) (Mesorhizobium loti (strain MAFF 303099)).